Here is a 489-residue protein sequence, read N- to C-terminus: Metalloreductase STEAP2 (489 aa).

NADP(+) is bound by residues 37 to 40, 59 to 60, 92 to 99, Asn-117, and Ala-150; these read SGDF, SR, and IHREHYTS. FAD-binding residues include Trp-151 and Asp-159. Residues 207–227 traverse the membrane as a helical segment; that stretch reads LFTLWRGPVVVAISLATFFFL. Tyr-228 provides a ligand contact to Fe(3+). The helical transmembrane segment at 258-278 threads the bilayer; that stretch reads LPIVAITLLSLVYLAGLLAAA. Positions 258-406 constitute a Ferric oxidoreductase domain; sequence LPIVAITLLS…LGYVALLITT (149 aa). FAD-binding residues include Gln-280 and Arg-301. The next 4 helical transmembrane spans lie at 304-324, 358-378, 392-412, and 431-451; these read LGLL…CLPM, MYIS…VTSI, FIQS…VLIY, and FVLA…LLLP. His-315 lines the heme b pocket. Tyr-318 is a Fe(3+) binding site. Residues Ser-377 and Gln-394 each coordinate FAD. His-408 contacts heme b. Ser-482 is modified (phosphoserine).

This sequence belongs to the STEAP family. FAD serves as cofactor. The cofactor is heme b.

It is found in the cell membrane. Its subcellular location is the endosome membrane. It carries out the reaction 2 Fe(2+) + NADP(+) + H(+) = 2 Fe(3+) + NADPH. It catalyses the reaction 2 Cu(+) + NADP(+) + H(+) = 2 Cu(2+) + NADPH. Its function is as follows. Integral membrane protein that functions as a NADPH-dependent ferric-chelate reductase, using NADPH from one side of the membrane to reduce a Fe(3+) chelate that is bound on the other side of the membrane. Mediates sequential transmembrane electron transfer from NADPH to FAD and onto heme, and finally to the Fe(3+) chelate. Can also reduce Cu(2+) to Cu(1+). This Mus musculus (Mouse) protein is Metalloreductase STEAP2 (Steap2).